The following is a 395-amino-acid chain: Putative 8-amino-7-oxononanoate synthase (395 aa).

Arginine 23 lines the substrate pocket. Pyridoxal 5'-phosphate is bound at residue 110-111 (GY). Histidine 135 contacts substrate. Residues serine 182, 207 to 210 (DEAH), and 239 to 242 (TFSK) each bind pyridoxal 5'-phosphate. Position 242 is an N6-(pyridoxal phosphate)lysine (lysine 242). Residue threonine 356 coordinates substrate.

Belongs to the class-II pyridoxal-phosphate-dependent aminotransferase family. BioF subfamily. Homodimer. Pyridoxal 5'-phosphate serves as cofactor.

It carries out the reaction 6-carboxyhexanoyl-[ACP] + L-alanine + H(+) = (8S)-8-amino-7-oxononanoate + holo-[ACP] + CO2. The protein operates within cofactor biosynthesis; biotin biosynthesis. Catalyzes the decarboxylative condensation of pimeloyl-[acyl-carrier protein] and L-alanine to produce 8-amino-7-oxononanoate (AON), [acyl-carrier protein], and carbon dioxide. In Bacillus cereus (strain ATCC 10987 / NRS 248), this protein is Putative 8-amino-7-oxononanoate synthase (bioF).